The following is a 256-amino-acid chain: MRILLTNDDGIHAEGLSVLERIARTISDDVWVVAPEVDQSGLAHSLTLSEPLRLRPVSERRFALRGTPTDCVIMAVKKILDRKPDLVLSGVNVGANLADDVTYSGTVAGAIEGTLQGIRSIALSQAYQHAVGRDVPWDVAETHAPALIRTLMGVDLPDGTLINLNFPNCAVDAVAGVEVTSQGKLEFGLSIDERTDGRGFPYFWLRFGERAGDFRSGTDIRALRDNRISVTPLKLDMTDHAAQERIAQALREGSVA.

4 residues coordinate a divalent metal cation: Asp8, Asp9, Ser40, and Asn92.

It belongs to the SurE nucleotidase family. Requires a divalent metal cation as cofactor.

It is found in the cytoplasm. The catalysed reaction is a ribonucleoside 5'-phosphate + H2O = a ribonucleoside + phosphate. In terms of biological role, nucleotidase that shows phosphatase activity on nucleoside 5'-monophosphates. The chain is 5'-nucleotidase SurE from Rhizobium meliloti (strain 1021) (Ensifer meliloti).